A 105-amino-acid chain; its full sequence is UPF0235 protein Mext_2130 (105 aa).

Belongs to the UPF0235 family.

In Methylorubrum extorquens (strain PA1) (Methylobacterium extorquens), this protein is UPF0235 protein Mext_2130.